Here is a 403-residue protein sequence, read N- to C-terminus: S-adenosylmethionine synthase (403 aa).

ATP is bound at residue His17. Asp19 contacts Mg(2+). Glu45 contributes to the K(+) binding site. The L-methionine site is built by Glu58 and Gln104. The segment at 104 to 114 (QSPDIAQGVDT) is flexible loop. Residues 179 to 181 (DGK), 250 to 251 (KF), Asp259, 265 to 266 (RK), Ala282, and Lys286 contribute to the ATP site. An L-methionine-binding site is contributed by Asp259. Lys290 is a binding site for L-methionine.

This sequence belongs to the AdoMet synthase family. In terms of assembly, homotetramer; dimer of dimers. The cofactor is Mg(2+). K(+) serves as cofactor.

Its subcellular location is the cytoplasm. It carries out the reaction L-methionine + ATP + H2O = S-adenosyl-L-methionine + phosphate + diphosphate. The protein operates within amino-acid biosynthesis; S-adenosyl-L-methionine biosynthesis; S-adenosyl-L-methionine from L-methionine: step 1/1. Its function is as follows. Catalyzes the formation of S-adenosylmethionine (AdoMet) from methionine and ATP. The overall synthetic reaction is composed of two sequential steps, AdoMet formation and the subsequent tripolyphosphate hydrolysis which occurs prior to release of AdoMet from the enzyme. The protein is S-adenosylmethionine synthase of Mycolicibacterium paratuberculosis (strain ATCC BAA-968 / K-10) (Mycobacterium paratuberculosis).